A 94-amino-acid chain; its full sequence is Putative pterin-4-alpha-carbinolamine dehydratase (94 aa).

It belongs to the pterin-4-alpha-carbinolamine dehydratase family.

It catalyses the reaction (4aS,6R)-4a-hydroxy-L-erythro-5,6,7,8-tetrahydrobiopterin = (6R)-L-erythro-6,7-dihydrobiopterin + H2O. The protein is Putative pterin-4-alpha-carbinolamine dehydratase of Mycobacterium leprae (strain Br4923).